We begin with the raw amino-acid sequence, 65 residues long: Large ribosomal subunit protein bL28 (65 aa).

A disordered region spans residues 1 to 26; sequence MARRDALTGKSALSGQSRSHALNATK. Positions 11–22 are enriched in polar residues; sequence SALSGQSRSHAL.

This sequence belongs to the bacterial ribosomal protein bL28 family.

This Mycoplasma mycoides subsp. mycoides SC (strain CCUG 32753 / NCTC 10114 / PG1) protein is Large ribosomal subunit protein bL28.